The following is a 159-amino-acid chain: ATP synthase subunit b 2 (159 aa).

The helical transmembrane segment at 1 to 21 (MDATFWAFIALVIFVVIVVYM) threads the bilayer.

It belongs to the ATPase B chain family. In terms of assembly, F-type ATPases have 2 components, F(1) - the catalytic core - and F(0) - the membrane proton channel. F(1) has five subunits: alpha(3), beta(3), gamma(1), delta(1), epsilon(1). F(0) has three main subunits: a(1), b(2) and c(10-14). The alpha and beta chains form an alternating ring which encloses part of the gamma chain. F(1) is attached to F(0) by a central stalk formed by the gamma and epsilon chains, while a peripheral stalk is formed by the delta and b chains.

The protein resides in the cell inner membrane. F(1)F(0) ATP synthase produces ATP from ADP in the presence of a proton or sodium gradient. F-type ATPases consist of two structural domains, F(1) containing the extramembraneous catalytic core and F(0) containing the membrane proton channel, linked together by a central stalk and a peripheral stalk. During catalysis, ATP synthesis in the catalytic domain of F(1) is coupled via a rotary mechanism of the central stalk subunits to proton translocation. Functionally, component of the F(0) channel, it forms part of the peripheral stalk, linking F(1) to F(0). In Brucella canis (strain ATCC 23365 / NCTC 10854 / RM-666), this protein is ATP synthase subunit b 2.